Consider the following 264-residue polypeptide: S-adenosylmethionine decarboxylase proenzyme (264 aa).

The Schiff-base intermediate with substrate; via pyruvic acid role is filled by Ser112. Ser112 bears the Pyruvic acid (Ser); by autocatalysis mark. Residue His117 is the Proton acceptor; for processing activity of the active site. The Proton donor; for catalytic activity role is filled by Cys140.

It belongs to the prokaryotic AdoMetDC family. Type 2 subfamily. In terms of assembly, heterooctamer of four alpha and four beta chains arranged as a tetramer of alpha/beta heterodimers. Requires pyruvate as cofactor. In terms of processing, is synthesized initially as an inactive proenzyme. Formation of the active enzyme involves a self-maturation process in which the active site pyruvoyl group is generated from an internal serine residue via an autocatalytic post-translational modification. Two non-identical subunits are generated from the proenzyme in this reaction, and the pyruvate is formed at the N-terminus of the alpha chain, which is derived from the carboxyl end of the proenzyme. The post-translation cleavage follows an unusual pathway, termed non-hydrolytic serinolysis, in which the side chain hydroxyl group of the serine supplies its oxygen atom to form the C-terminus of the beta chain, while the remainder of the serine residue undergoes an oxidative deamination to produce ammonia and the pyruvoyl group blocking the N-terminus of the alpha chain.

It carries out the reaction S-adenosyl-L-methionine + H(+) = S-adenosyl 3-(methylsulfanyl)propylamine + CO2. It participates in amine and polyamine biosynthesis; S-adenosylmethioninamine biosynthesis; S-adenosylmethioninamine from S-adenosyl-L-methionine: step 1/1. Functionally, catalyzes the decarboxylation of S-adenosylmethionine to S-adenosylmethioninamine (dcAdoMet), the propylamine donor required for the synthesis of the polyamines spermine and spermidine from the diamine putrescine. This chain is S-adenosylmethionine decarboxylase proenzyme, found in Yersinia pseudotuberculosis serotype O:1b (strain IP 31758).